Reading from the N-terminus, the 143-residue chain is Transcriptional regulator MraZ (143 aa).

SpoVT-AbrB domains follow at residues 5-47 (TYTP…PREE) and 76-119 (TDEQ…DAQA).

It belongs to the MraZ family. In terms of assembly, forms oligomers.

The protein resides in the cytoplasm. The protein localises to the nucleoid. The polypeptide is Transcriptional regulator MraZ (Rhodococcus opacus (strain B4)).